A 492-amino-acid chain; its full sequence is Trichothecene C-15 hydroxylase (492 aa).

A helical transmembrane segment spans residues Leu6 to Val26. Residues Ala88–Asp106 show a composition bias toward basic and acidic residues. Residues Ala88–Asn116 are disordered. 3 N-linked (GlcNAc...) asparagine glycosylation sites follow: Asn124, Asn198, and Asn290. Residue Cys438 coordinates heme.

It belongs to the cytochrome P450 family. Heme serves as cofactor.

It localises to the membrane. The protein operates within sesquiterpene biosynthesis; trichothecene biosynthesis. In terms of biological role, trichothecene C-15 hydroxylase; part of the core gene cluster that mediates the biosynthesis of trichothecenes, a very large family of chemically related bicyclic sesquiterpene compounds acting as mycotoxins, including T2-toxin. The biosynthesis of trichothecenes begins with the cyclization of farnesyl diphosphate to trichodiene and is catalyzed by the trichodiene synthase TRI5. Trichodiene undergoes a series of oxygenations catalyzed by the cytochrome P450 monooxygenase TRI4. TRI4 controls the addition of four oxygens at C-2, C-3, C-11, and the C-12, C-13-epoxide to form the intermediate isotrichotriol. Isotrichotriol then undergoes a non-enzymatic isomerization and cyclization to form isotrichodermol. During this process, the oxygen at the C-2 position becomes the pyran ring oxygen and the hydroxyl group at C-11 is lost. More complex type A trichothecenes are built by modifying isotrichodermol through a series of paired hydroxylation and acetylation or acylation steps. Isotrichodermol is converted to isotrichodermin by the acetyltransferase TRI101. TRI101 encodes a C-3 transacetylase that acts as a self-protection or resistance factor during biosynthesis and that the presence of a free C-3 hydroxyl group is a key component of Fusarium trichothecene phytotoxicity. A second hydroxyl group is added to C-15 by the trichothecene C-15 hydroxylase TRI11, producing 15-decalonectrin, which is then acetylated by TRI3, producing calonectrin. A third hydroxyl group is added at C-4 by the cytochrome P450 monooxygenase TRI13, converting calonectrin to 3,15-diacetoxyspirpenol, which is subsequently acetylated by the acetyltransferase TRI7. A fourth hydroxyl group is added to C-8 by the cytochrome P450 monooxygenase TRI1, followed by the addition of an isovaleryl moiety by TRI16. Finally, the acetyl group is removed from the C-3 position by the trichothecene C-3 esterase TRI8 to produce T-2 toxin. The protein is Trichothecene C-15 hydroxylase of Fusarium sporotrichioides.